Consider the following 259-residue polypeptide: Imidazole glycerol phosphate synthase subunit HisF (259 aa).

Catalysis depends on residues D11 and D130.

Belongs to the HisA/HisF family. Heterodimer of HisH and HisF.

The protein resides in the cytoplasm. The catalysed reaction is 5-[(5-phospho-1-deoxy-D-ribulos-1-ylimino)methylamino]-1-(5-phospho-beta-D-ribosyl)imidazole-4-carboxamide + L-glutamine = D-erythro-1-(imidazol-4-yl)glycerol 3-phosphate + 5-amino-1-(5-phospho-beta-D-ribosyl)imidazole-4-carboxamide + L-glutamate + H(+). Its pathway is amino-acid biosynthesis; L-histidine biosynthesis; L-histidine from 5-phospho-alpha-D-ribose 1-diphosphate: step 5/9. In terms of biological role, IGPS catalyzes the conversion of PRFAR and glutamine to IGP, AICAR and glutamate. The HisF subunit catalyzes the cyclization activity that produces IGP and AICAR from PRFAR using the ammonia provided by the HisH subunit. The polypeptide is Imidazole glycerol phosphate synthase subunit HisF (Desulforapulum autotrophicum (strain ATCC 43914 / DSM 3382 / VKM B-1955 / HRM2) (Desulfobacterium autotrophicum)).